The primary structure comprises 265 residues: Keratinocyte-associated transmembrane protein 2 (265 aa).

Residues 1-49 (MAAAALKRMRGPAQAKLLPGSAIQALVGLARPLVLALLLVSAALSSVVS) form the signal peptide. The Extracellular portion of the chain corresponds to 50–196 (RTDSPSPTVL…MPSSNIEEED (147 aa)). The segment covering 72–96 (THENQTKPSISQISTTLPPTMSTEK) has biased composition (polar residues). 2 disordered regions span residues 72 to 123 (THEN…EDPS) and 135 to 168 (SPSTAKDTLDNGDYGEPDYDWTTGPRDDDESDDT). N-linked (GlcNAc...) asparagine glycosylation is present at N75. A compositionally biased stretch (acidic residues) spans 114–123 (EEADNNEDPS). The helical transmembrane segment at 197-217 (SHFFFHLIIFAFCIAVVYITY) threads the bilayer. The Cytoplasmic portion of the chain corresponds to 218–265 (HNKRKIFLLVQSRKWRDGLCSKTVEYHRLDQNVNEAMPSLKITNDYTF). Residues S229 and S256 each carry the phosphoserine modification.

It localises to the membrane. The chain is Keratinocyte-associated transmembrane protein 2 (KCT2) from Pongo abelii (Sumatran orangutan).